A 783-amino-acid polypeptide reads, in one-letter code: Endonuclease MutS2 (783 aa).

328 to 335 (GPNTGGKT) contacts ATP. The Smr domain occupies 708 to 783 (LDLRGKRYEE…GSGCTIATLG (76 aa)).

This sequence belongs to the DNA mismatch repair MutS family. MutS2 subfamily. As to quaternary structure, homodimer. Binds to stalled ribosomes, contacting rRNA.

Functionally, endonuclease that is involved in the suppression of homologous recombination and thus may have a key role in the control of bacterial genetic diversity. Acts as a ribosome collision sensor, splitting the ribosome into its 2 subunits. Detects stalled/collided 70S ribosomes which it binds and splits by an ATP-hydrolysis driven conformational change. Acts upstream of the ribosome quality control system (RQC), a ribosome-associated complex that mediates the extraction of incompletely synthesized nascent chains from stalled ribosomes and their subsequent degradation. Probably generates substrates for RQC. This is Endonuclease MutS2 from Streptococcus thermophilus (strain ATCC BAA-250 / LMG 18311).